A 56-amino-acid polypeptide reads, in one-letter code: Ribosome biogenesis protein Nop10 (56 aa).

The protein belongs to the NOP10 family.

Involved in ribosome biogenesis; more specifically in 18S rRNA pseudouridylation and in cleavage of pre-rRNA. This chain is Ribosome biogenesis protein Nop10, found in Methanococcoides burtonii (strain DSM 6242 / NBRC 107633 / OCM 468 / ACE-M).